We begin with the raw amino-acid sequence, 103 residues long: Flagellar hook-basal body complex protein FliE (103 aa).

This sequence belongs to the FliE family.

The protein localises to the bacterial flagellum basal body. The chain is Flagellar hook-basal body complex protein FliE from Yersinia pestis.